Reading from the N-terminus, the 170-residue chain is Photosystem I assembly protein Ycf3 (170 aa).

3 TPR repeats span residues 35–68 (AFTY…EIDP), 72–105 (SYIL…NPFL), and 120–153 (GEQA…TPGN).

The protein belongs to the Ycf3 family.

Its subcellular location is the plastid. The protein localises to the chloroplast thylakoid membrane. Functionally, essential for the assembly of the photosystem I (PSI) complex. May act as a chaperone-like factor to guide the assembly of the PSI subunits. The polypeptide is Photosystem I assembly protein Ycf3 (Triticum aestivum (Wheat)).